We begin with the raw amino-acid sequence, 859 residues long: Heterogeneous nuclear ribonucleoprotein U-like protein 1 (859 aa).

The segment at 1–103 (MDVRRLKVNE…GPDGHYVMDN (103 aa)) is necessary for interaction with HRMT1L1. Residues 3–37 (VRRLKVNELREELQRRGLDTRGLKAELAERLLAAL) enclose the SAP domain. The tract at residues 36–131 (ALEAEEPEDE…SSYDRRPLDM (96 aa)) is disordered. Acidic residues predominate over residues 38–54 (EAEEPEDERELEADDDP). Pro residues predominate over residues 77–88 (QPPPPGLQPHPE). Lysine 117 is covalently cross-linked (Glycyl lysine isopeptide (Lys-Gly) (interchain with G-Cter in SUMO1); alternate). A Glycyl lysine isopeptide (Lys-Gly) (interchain with G-Cter in SUMO2); alternate cross-link involves residue lysine 117. Residues 118–130 (QENESSYDRRPLD) are compositionally biased toward basic and acidic residues. A Glycyl lysine isopeptide (Lys-Gly) (interchain with G-Cter in SUMO1); alternate cross-link involves residue lysine 143. Lysine 143 is covalently cross-linked (Glycyl lysine isopeptide (Lys-Gly) (interchain with G-Cter in SUMO2); alternate). The tract at residues 146–206 (MKQEAPPSFL…QPPAEEDEDD (61 aa)) is disordered. Glycyl lysine isopeptide (Lys-Gly) (interchain with G-Cter in SUMO2) cross-links involve residues lysine 147 and lysine 163. A compositionally biased stretch (basic and acidic residues) spans 174 to 193 (RPFEENRGRGYFEHREDRRG). The region spanning 192–389 (RGRSPQPPAE…VEFNFGQRAE (198 aa)) is the B30.2/SPRY domain. At serine 195 the chain carries Phosphoserine. Threonine 210 is modified (phosphothreonine). The necessary for interaction with TP53 stretch occupies residues 214 to 859 (IDTYNCDLHF…GSTQGGTSTQ (646 aa)). Glycyl lysine isopeptide (Lys-Gly) (interchain with G-Cter in SUMO2) cross-links involve residues lysine 271 and lysine 450. The interval 457–595 (NAIMDKMRVM…EEADKLVRQY (139 aa)) is necessary for interaction with BRD7 and transcriptional activation. Serine 513 is subject to Phosphoserine. Lysine 540 participates in a covalent cross-link: Glycyl lysine isopeptide (Lys-Gly) (interchain with G-Cter in SUMO2). Basic and acidic residues predominate over residues 595–612 (YNEEGRKAGPPPEKRFDS). Positions 595–814 (YNEEGRKAGP…PPTAQTYPQP (220 aa)) are disordered. Repeat copies occupy residues 613–615 (RGG), 620–622 (RGG), 639–641 (RGG), 645–647 (RGG), and 659–661 (RGG). 2 stretches are compositionally biased toward gly residues: residues 613 to 626 (RGGG…GGGF) and 634 to 670 (PPGG…GGGY). The interval 613-661 (RGGGFRGRGGGGGFQRYDNRGPPGGNRGGFQNRGGGGGSGGGGGNYRGG) is 5 X 3 AA repeats of R-G-G. The interval 613–661 (RGGGFRGRGGGGGFQRYDNRGPPGGNRGGFQNRGGGGGSGGGGGNYRGG) is necessary for transcription repression. Asymmetric dimethylarginine is present on arginine 639. Asymmetric dimethylarginine; alternate occurs at positions 645 and 659. Residues arginine 645 and arginine 659 each carry the omega-N-methylarginine; alternate modification. An omega-N-methylarginine mark is found at arginine 664 and arginine 674. The segment covering 671-696 (NQNRWGNNNRDNNNSNNRGNYNRAPQ) has biased composition (low complexity). The segment covering 697–720 (QQPPPQQPPPPQPPPQQPPPPPSY) has biased composition (pro residues). Phosphoserine is present on serine 721. The span at 728–744 (GASSYNKNSNIPGSSAN) shows a compositional bias: polar residues. Over residues 745–775 (TSTPTVSSYTPPQPSYSQPPYNQGGYTQGYT) the composition is skewed to low complexity. Composition is skewed to pro residues over residues 776 to 786 (APPPPPPPPPA) and 796 to 807 (NPAPYTPPPPPT).

In terms of assembly, interacts with BRD7, PRMT2, TP53 and NXF1. Associates with histones and BRD7. Methylated.

It localises to the nucleus. In terms of biological role, acts as a basic transcriptional regulator. Represses basic transcription driven by several virus and cellular promoters. When associated with BRD7, activates transcription of glucocorticoid-responsive promoter in the absence of ligand-stimulation. Also plays a role in mRNA processing and transport. Binds avidly to poly(G) and poly(C) RNA homopolymers in vitro. The polypeptide is Heterogeneous nuclear ribonucleoprotein U-like protein 1 (Hnrnpul1) (Mus musculus (Mouse)).